Consider the following 41-residue polypeptide: Large ribosomal subunit protein bL36 (41 aa).

This sequence belongs to the bacterial ribosomal protein bL36 family.

The chain is Large ribosomal subunit protein bL36 from Methylorubrum extorquens (strain CM4 / NCIMB 13688) (Methylobacterium extorquens).